The primary structure comprises 323 residues: Staphylococcal-like nuclease CAN1 (323 aa).

Residue G2 is the site of N-myristoyl glycine attachment. C11 is lipidated: S-palmitoyl cysteine. One can recognise a TNase-like domain in the interval N130–S306. D143 provides a ligand contact to Ca(2+). Residue R213 is part of the active site. Ca(2+) is bound at residue D218. Residues E221 and R255 contribute to the active site.

The protein belongs to the thermonuclease family. Requires Ca(2+) as cofactor.

It is found in the cell membrane. With respect to regulation, inhibited by Zn(2+). In terms of biological role, enzyme that catalyzes the hydrolysis of both DNA and RNA at the 5' position of the phosphodiester bond. Possesses activity toward the single-stranded DNA, double-stranded DNA and RNA. May be involved in genomic DNA degradation during programmed cell death. This is Staphylococcal-like nuclease CAN1 (CAN1) from Arabidopsis thaliana (Mouse-ear cress).